The following is a 1218-amino-acid chain: Protein jagged-1 (1218 aa).

An N-terminal signal peptide occupies residues 1 to 33 (MRSPRTRGRSGRPLSLLLALLCALRAKVCGASG). The Extracellular segment spans residues 34 to 1067 (QFELEILSMQ…QRRPLKNRTD (1034 aa)). N-linked (GlcNAc...) asparagine glycosylation occurs at Asn-143. The DSL domain maps to 185–229 (VTCDDYYYGFGCNKFCRPRDDFFGHYACDQNGNKTCMEGWMGPEC). Cystine bridges form between Cys-187/Cys-196 and Cys-200/Cys-212. Residues 199–207 (FCRPRDDFF) form an important for interaction with NOTCH1 region. N-linked (GlcNAc...) asparagine glycosylation is present at Asn-217. 40 disulfide bridges follow: Cys-220–Cys-229, Cys-234–Cys-245, Cys-238–Cys-251, Cys-253–Cys-262, Cys-265–Cys-276, Cys-271–Cys-282, Cys-284–Cys-293, Cys-300–Cys-312, Cys-306–Cys-322, Cys-324–Cys-333, Cys-340–Cys-351, Cys-345–Cys-360, Cys-362–Cys-371, Cys-378–Cys-389, Cys-383–Cys-398, Cys-400–Cys-409, Cys-416–Cys-427, Cys-421–Cys-436, Cys-438–Cys-447, Cys-454–Cys-464, Cys-458–Cys-473, Cys-475–Cys-484, Cys-491–Cys-502, Cys-496–Cys-511, Cys-513–Cys-522, Cys-529–Cys-540, Cys-534–Cys-549, Cys-551–Cys-560, Cys-578–Cys-605, Cys-599–Cys-615, Cys-617–Cys-626, Cys-633–Cys-644, Cys-638–Cys-653, Cys-655–Cys-664, Cys-671–Cys-682, Cys-676–Cys-691, Cys-693–Cys-702, Cys-709–Cys-720, Cys-714–Cys-729, and Cys-731–Cys-740. One can recognise an EGF-like 1 domain in the interval 230 to 263 (NRAICRQGCSPKHGSCKLPGDCRCQYGWQGLYCD). The EGF-like 2; atypical domain occupies 264–294 (KCIPHPGCVHGICNEPWQCLCETNWGGQLCD). EGF-like domains follow at residues 296–334 (DLNYCGTHQPCLNGGTCSNTGPDKYQCSCPEGYSGPNCE) and 336–372 (AEHACLSDPCHNRGSCKETSLGFECECSPGWTGPTCS). The EGF-like 5; calcium-binding domain occupies 374–410 (NIDDCSPNNCSHGGTCQDLVNGFKCVCPPQWTGKTCQ). N-linked (GlcNAc...) asparagine glycosylation is present at Asn-382. The 37-residue stretch at 412–448 (DANECEAKPCVNAKSCKNLIASYYCDCLPGWMGQNCD) folds into the EGF-like 6; calcium-binding domain. The EGF-like 7; calcium-binding domain occupies 450–485 (NINDCLGQCQNDASCRDLVNGYRCICPPGYAGDHCE). Residues 487–523 (DIDECASNPCLNGGHCQNEINRFQCLCPTGFSGNLCQ) form the EGF-like 8; calcium-binding domain. EGF-like domains follow at residues 525-561 (DIDYCEPNPCQNGAQCYNRASDYFCKCPEDYEGKNCS) and 586-627 (DTPE…TYCH). Asn-559 is a glycosylation site (N-linked (GlcNAc...) asparagine). The 37-residue stretch at 629–665 (NINDCESNPCRNGGTCIDGVNSYKCICSDGWEGAYCE) folds into the EGF-like 11; calcium-binding domain. The EGF-like 12; calcium-binding domain maps to 667–703 (NINDCSQNPCHNGGTCRDLVNDFYCDCKNGWKGKTCH). 2 consecutive EGF-like domains span residues 705 to 741 (RDSQCDEATCNNGGTCYDEGDAFKCMCPGGWEGTTCN) and 744 to 780 (RNSSCLPNPCHNGGTCVVNGESFTCVCKEGWEGPICA). N-linked (GlcNAc...) asparagine glycosylation is present at Asn-745. Cystine bridges form between Cys-748–Cys-759, Cys-753–Cys-768, Cys-770–Cys-779, Cys-786–Cys-797, Cys-791–Cys-806, Cys-808–Cys-817, Cys-824–Cys-835, Cys-829–Cys-844, and Cys-846–Cys-855. Residues 782 to 818 (NTNDCSPHPCYNSGTCVDGDNWYRCECAPGFAGPDCR) form the EGF-like 15; calcium-binding domain. Positions 820 to 856 (NINECQSSPCAFGATCVDEINGYRCVCPPGHSGAKCQ) constitute an EGF-like 16; calcium-binding domain. 4 N-linked (GlcNAc...) asparagine glycosylation sites follow: Asn-960, Asn-991, Asn-1045, and Asn-1064. A helical membrane pass occupies residues 1068-1093 (FLVPLLSSVLTVAWICCLVTAFYWCL). Residues 1094-1218 (RKRRKPGSHT…QSLNRMEYIV (125 aa)) are Cytoplasmic-facing. Positions 1152 to 1218 (HNSEVEEDDM…QSLNRMEYIV (67 aa)) are disordered. The span at 1189 to 1199 (TPTKHPNWTNK) shows a compositional bias: polar residues.

In terms of assembly, interacts with NOTCH2 and NOTCH3. Interacts with NOTCH1 (in the presence of calcium ions). Widely expressed in adult and fetal tissues. In cervix epithelium expressed in undifferentiated subcolumnar reserve cells and squamous metaplasia. Expression is up-regulated in cervical squamous cell carcinoma. Expressed in bone marrow cell line HS-27a which supports the long-term maintenance of immature progenitor cells.

It localises to the membrane. Its subcellular location is the cell membrane. In terms of biological role, ligand for multiple Notch receptors and involved in the mediation of Notch signaling. May be involved in cell-fate decisions during hematopoiesis. Seems to be involved in early and late stages of mammalian cardiovascular development. Inhibits myoblast differentiation. Enhances fibroblast growth factor-induced angiogenesis (in vitro). The chain is Protein jagged-1 (JAG1) from Homo sapiens (Human).